Here is a 379-residue protein sequence, read N- to C-terminus: Acyl-CoA dehydrogenase, short-chain specific (379 aa).

Belongs to the acyl-CoA dehydrogenase family. FAD serves as cofactor.

It carries out the reaction butanoyl-CoA + oxidized [electron-transfer flavoprotein] + H(+) = (2E)-butenoyl-CoA + reduced [electron-transfer flavoprotein]. The enzyme catalyses a short-chain 2,3-saturated fatty acyl-CoA + oxidized [electron-transfer flavoprotein] + H(+) = a short-chain (2E)-enoyl-CoA + reduced [electron-transfer flavoprotein]. It participates in lipid metabolism; butanoate metabolism. The chain is Acyl-CoA dehydrogenase, short-chain specific (bcd) from Clostridium acetobutylicum (strain ATCC 824 / DSM 792 / JCM 1419 / IAM 19013 / LMG 5710 / NBRC 13948 / NRRL B-527 / VKM B-1787 / 2291 / W).